Here is a 370-residue protein sequence, read N- to C-terminus: Alpha-(1,3)-fucosyltransferase 7 (370 aa).

At 1–36 (MVQGCLCWRGCCDLKTSFPWVTNSRRLWMNCIGCNP) the chain is on the cytoplasmic side. Residues 37 to 59 (VWRLRAWGCLAGGTTLMVIWLFW) traverse the membrane as a helical; Signal-anchor for type II membrane protein segment. At 60–370 (LLRSVPGGAP…YEDLESWFQA (311 aa)) the chain is on the lumenal side. The N-linked (GlcNAc...) asparagine glycan is linked to asparagine 86. Residues cysteine 96 and cysteine 104 are joined by a disulfide bond. N-linked (GlcNAc...) asparagine glycosylation is present at asparagine 109. Cysteine 239 and cysteine 242 are oxidised to a cystine. Asparagine 319 carries an N-linked (GlcNAc...) asparagine glycan. A disulfide bond links cysteine 346 and cysteine 349.

This sequence belongs to the glycosyltransferase 10 family. N-glycosylated. As to expression, expressed in lymph node and kidney.

The protein localises to the golgi apparatus. The protein resides in the golgi stack membrane. It carries out the reaction an N-acetyl-alpha-neuraminyl-(2-&gt;3)-beta-D-galactosyl-(1-&gt;4)-N-acetyl-beta-D-glucosaminyl derivative + GDP-beta-L-fucose = an alpha-Neu5Ac-(2-&gt;3)-beta-D-Gal-(1-&gt;4)-[alpha-L-Fuc-(1-&gt;3)]-beta-D-GlcNAc derivative + GDP + H(+). The enzyme catalyses a neolactoside IV(3)-alpha-NeuAc-nLc4Cer + GDP-beta-L-fucose = a neolactoside IV(3)-alpha-NeuNAc,III(3)-alpha-Fuc-nLc4Cer + GDP + H(+). It catalyses the reaction a neolactoside VI(3)-alpha-NeuNAc-nLc6Cer + GDP-beta-L-fucose = a neolactoside VI(3)-alpha-NeuAc,V(3)-alphaFuc-nLc6Cer + GDP + H(+). The catalysed reaction is an alpha-Neu5Ac-(2-&gt;3)-beta-D-Gal-(1-&gt;4)-beta-D-GlcNAc-(1-&gt;3)-beta-D-Gal-(1-&gt;4)-[alpha-L-Fuc-(1-&gt;3)]-beta-D-GlcNAc derivative + GDP-beta-L-fucose = an alpha-Neu5Ac-(2-&gt;3)-beta-D-Gal-(1-&gt;4)-[alpha-L-Fuc-(1-&gt;3)]-beta-D-GlcNAc-(1-&gt;3)-beta-D-Gal-(1-&gt;4)-[alpha-L-Fuc-(1-&gt;3)]-beta-D-GlcNAc derivative + GDP + H(+). It carries out the reaction an alpha-Neu5Ac-(2-&gt;3)-beta-D-Gal-(1-&gt;4)-beta-D-GlcNAc6S derivative + GDP-beta-L-fucose = an alpha-Neu5Ac-(2-&gt;3)-beta-D-Gal-(1-&gt;4)-[alpha-L-Fuc-(1-&gt;3)]-beta-D-GlcNAc6S derivative + GDP + H(+). The enzyme catalyses alpha-Neu5Ac-(2-&gt;3)-beta-D-Gal-(1-&gt;4)-beta-D-GlcNAc-(1-&gt;3)-beta-D-Gal-(1-&gt;4)-D-Glc + GDP-beta-L-fucose = alpha-Neu5Ac-(2-&gt;3)-beta-D-Gal-(1-&gt;4)-[alpha-L-Fuc-(1-&gt;3)]-beta-D-GlcNAc-(1-&gt;3)-beta-D-Gal-(1-&gt;4)-D-Glc + GDP + H(+). It catalyses the reaction alpha-Neu5Ac-(2-&gt;3)-beta-D-Gal-(1-&gt;4)-beta-D-GlcNAc-(1-&gt;3)-beta-D-Gal-(1-&gt;4)-[alpha-L-Fuc-(1-&gt;3)]-beta-D-GlcNAc-(1-&gt;3)-beta-D-Gal-(1-&gt;4)-beta-D-GlcNAc + GDP-beta-L-fucose = alpha-Neu5Ac-(2-&gt;3)-beta-D-Gal-(1-&gt;4)-[alpha-L-Fuc-(1-&gt;3)]-beta-D-GlcNAc-(1-&gt;3)-beta-D-Gal-(1-&gt;4)-[alpha-L-Fuc-(1-&gt;3)]-beta-D-GlcNAc-(1-&gt;3)-beta-D-Gal-(1-&gt;4)-beta-D-GlcNAc + GDP + H(+). The catalysed reaction is alpha-Neu5Ac-(2-&gt;3)-beta-D-Gal-(1-&gt;4)-beta-D-GlcNAc-(1-&gt;3)-beta-D-Gal-(1-&gt;4)-beta-D-GlcNAc-(1-&gt;3)-beta-D-Gal-(1-&gt;4)-beta-D-GlcNAc + GDP-beta-L-fucose = alpha-Neu5Ac-(2-&gt;3)-beta-D-Gal-(1-&gt;4)-[alpha-L-Fuc-(1-&gt;3)]-beta-D-GlcNAc-(1-&gt;3)-beta-D-Gal-(1-&gt;4)-beta-D-GlcNAc-(1-&gt;3)-beta-D-Gal-(1-&gt;4)-beta-D-GlcNAc + GDP + H(+). Its pathway is protein modification; protein glycosylation. Its activity is regulated as follows. Inhibited by NaCl. Inhibited by GDP in a concentration dependent manner, with an IC(50) value of 93 uM. Also inhibited by GMP and GTP. Inhibited by N-ethylmaleimide. Activated by poly(ethylene glycol) by enhancing the thermal stability of FUT7. Activated by Mn2+, Ca2+, and Mg2+. Both panosialin A and B inhibit activity with IC(50) values of 4.8 and 5.3 ug/ml, respectively. Inhibited by gallic acid (GA) and (-)-epigallocatechin gallate (EGCG) in a time-dependent and irreversible manner with IC(50) values of 60 and 700 nM, respectively. Its function is as follows. Catalyzes the transfer of L-fucose, from a guanosine diphosphate-beta-L-fucose, to the N-acetyl glucosamine (GlcNAc) of a distal alpha2,3 sialylated lactosamine unit of a glycoprotein or a glycolipid-linked sialopolylactosamines chain through an alpha-1,3 glycosidic linkage and participates in the final fucosylation step in the biosynthesis of the sialyl Lewis X (sLe(x)), a carbohydrate involved in cell and matrix adhesion during leukocyte trafficking and fertilization. In vitro, also synthesizes sialyl-dimeric-Lex structures, from VIM-2 structures and both di-fucosylated and trifucosylated structures from mono-fucosylated precursors. However does not catalyze alpha 1-3 fucosylation when an internal alpha 1-3 fucosylation is present in polylactosamine chain and the fucosylation rate of the internal GlcNAc residues is reduced once fucose has been added to the distal GlcNAc. Also catalyzes the transfer of a fucose from GDP-beta-fucose to the 6-sulfated a(2,3)sialylated substrate to produce 6-sulfo sLex mediating significant L-selectin-dependent cell adhesion. Through sialyl-Lewis(x) biosynthesis, can control SELE- and SELP-mediated cell adhesion with leukocytes and allows leukocytes tethering and rolling along the endothelial tissue thereby enabling the leukocytes to accumulate at a site of inflammation. May enhance embryo implantation through sialyl Lewis X (sLeX)-mediated adhesion of embryo cells to endometrium. May affect insulin signaling by up-regulating the phosphorylation and expression of some signaling molecules involved in the insulin-signaling pathway through SLe(x) which is present on the glycans of the INSRR alpha subunit. This Rattus norvegicus (Rat) protein is Alpha-(1,3)-fucosyltransferase 7.